The sequence spans 178 residues: Cytochrome b6-f complex iron-sulfur subunit (178 aa).

A helical transmembrane segment spans residues 20–42; sequence LLTFGTATGVALGALYPVANYFM. Residues 65-161 form the Rieske domain; it reads KTGWLATHQA…VDIEDDAVLV (97 aa). Positions 107, 109, 125, and 128 each coordinate [2Fe-2S] cluster. An intrachain disulfide couples Cys112 to Cys127.

The protein belongs to the Rieske iron-sulfur protein family. The 4 large subunits of the cytochrome b6-f complex are cytochrome b6, subunit IV (17 kDa polypeptide, PetD), cytochrome f and the Rieske protein, while the 4 small subunits are PetG, PetL, PetM and PetN. The complex functions as a dimer. It depends on [2Fe-2S] cluster as a cofactor.

The protein resides in the cellular thylakoid membrane. The catalysed reaction is 2 oxidized [plastocyanin] + a plastoquinol + 2 H(+)(in) = 2 reduced [plastocyanin] + a plastoquinone + 4 H(+)(out). In terms of biological role, component of the cytochrome b6-f complex, which mediates electron transfer between photosystem II (PSII) and photosystem I (PSI), cyclic electron flow around PSI, and state transitions. This Prochlorococcus marinus (strain AS9601) protein is Cytochrome b6-f complex iron-sulfur subunit.